A 230-amino-acid chain; its full sequence is 2-C-methyl-D-erythritol 4-phosphate cytidylyltransferase (230 aa).

The protein belongs to the IspD/TarI cytidylyltransferase family. IspD subfamily.

It catalyses the reaction 2-C-methyl-D-erythritol 4-phosphate + CTP + H(+) = 4-CDP-2-C-methyl-D-erythritol + diphosphate. The protein operates within isoprenoid biosynthesis; isopentenyl diphosphate biosynthesis via DXP pathway; isopentenyl diphosphate from 1-deoxy-D-xylulose 5-phosphate: step 2/6. Its function is as follows. Catalyzes the formation of 4-diphosphocytidyl-2-C-methyl-D-erythritol from CTP and 2-C-methyl-D-erythritol 4-phosphate (MEP). The sequence is that of 2-C-methyl-D-erythritol 4-phosphate cytidylyltransferase from Laribacter hongkongensis (strain HLHK9).